A 454-amino-acid chain; its full sequence is MCAAQMPPLAHIFRGTFVHSTWTCPMEVLRDHLLGVSDSGKIVFLEEASQQEKLAKEWCFKPCEIRELSHHEFFMPGLVDTHIHASQYSFAGSNIDLPLLEWLTKYTFPAEHRFQNTDFAEEVYTRVVRRTLKNGTTTACYFATIHTDSSLLLADITDKFGQRAFVGKVCMNLNDTFPEYNETTEESIKETERFVSEMLQRKYSRVKPIVTPRFSLSCSETLMGDLGNIAKTHDLHIQSHISENRDEVEAVKNLYPSYKNYTDVYDKNNLLTNKTVMAHGCYLSAEELNVFHERGASIAHCPNSNLSLSSGFLNVLEVLKHEVKIGLGTDVAGGYSYSMLDAIRRAVMVSNILLINKVNEKSLTLKEVFRLATLGGSQALGLDGEIGNFEVGKEFDAILINPKASDSPIDLFYGDFFGDISEAVIQKFLYLGDDRNIEEVYVGGKQVVPFSSSV.

Zn(2+) is bound by residues His-82 and His-84. Substrate contacts are provided by residues 84–87 (HASQ), 213–214 (RF), 240–243 (HISE), and Asp-330. Residues His-240 and Asp-330 each coordinate Zn(2+). Position 453 is a phosphoserine (Ser-453).

This sequence belongs to the metallo-dependent hydrolases superfamily. ATZ/TRZ family. In terms of assembly, homodimer. The cofactor is Zn(2+).

It carries out the reaction guanine + H2O + H(+) = xanthine + NH4(+). The protein operates within purine metabolism; guanine degradation; xanthine from guanine: step 1/1. Catalyzes the hydrolytic deamination of guanine, producing xanthine and ammonia. The chain is Guanine deaminase (GDA) from Pongo abelii (Sumatran orangutan).